Consider the following 538-residue polypeptide: Probable cytochrome P450 309a2 (538 aa).

C483 contributes to the heme binding site.

It belongs to the cytochrome P450 family. Heme serves as cofactor.

It is found in the endoplasmic reticulum membrane. Its subcellular location is the microsome membrane. Its function is as follows. May be involved in the metabolism of insect hormones and in the breakdown of synthetic insecticides. This Drosophila melanogaster (Fruit fly) protein is Probable cytochrome P450 309a2 (Cyp309a2).